Consider the following 532-residue polypeptide: Glucose-6-phosphate isomerase (532 aa).

Glu322 (proton donor) is an active-site residue. Residues His351 and Lys457 contribute to the active site.

The protein belongs to the GPI family.

The protein resides in the cytoplasm. It catalyses the reaction alpha-D-glucose 6-phosphate = beta-D-fructose 6-phosphate. The protein operates within carbohydrate biosynthesis; gluconeogenesis. It functions in the pathway carbohydrate degradation; glycolysis; D-glyceraldehyde 3-phosphate and glycerone phosphate from D-glucose: step 2/4. In terms of biological role, catalyzes the reversible isomerization of glucose-6-phosphate to fructose-6-phosphate. The chain is Glucose-6-phosphate isomerase from Synechococcus sp. (strain JA-2-3B'a(2-13)) (Cyanobacteria bacterium Yellowstone B-Prime).